The following is a 269-amino-acid chain: Undecaprenyl-diphosphatase (269 aa).

8 consecutive transmembrane segments (helical) span residues 1 to 21 (MSIF…FLPI), 39 to 59 (LPIL…CTVF), 86 to 106 (LMMI…GLLL), 112 to 132 (TIDI…LIAS), 144 to 164 (VTLL…IPGI), 184 to 204 (AGEF…ILEI), 210 to 230 (LLAG…FVVG), and 249 to 269 (FAFY…GFAG).

Belongs to the UppP family.

Its subcellular location is the cell inner membrane. It catalyses the reaction di-trans,octa-cis-undecaprenyl diphosphate + H2O = di-trans,octa-cis-undecaprenyl phosphate + phosphate + H(+). Catalyzes the dephosphorylation of undecaprenyl diphosphate (UPP). Confers resistance to bacitracin. In Treponema denticola (strain ATCC 35405 / DSM 14222 / CIP 103919 / JCM 8153 / KCTC 15104), this protein is Undecaprenyl-diphosphatase.